A 431-amino-acid chain; its full sequence is UPF0597 protein LCA_0156 (431 aa).

This sequence belongs to the UPF0597 family.

In Latilactobacillus sakei subsp. sakei (strain 23K) (Lactobacillus sakei subsp. sakei), this protein is UPF0597 protein LCA_0156.